The primary structure comprises 297 residues: Nucleotide-binding protein BTH_I0482 (297 aa).

ATP is bound at residue 8 to 15 (GISGSGKS). A GTP-binding site is contributed by 57–60 (DARS).

This sequence belongs to the RapZ-like family.

In terms of biological role, displays ATPase and GTPase activities. The polypeptide is Nucleotide-binding protein BTH_I0482 (Burkholderia thailandensis (strain ATCC 700388 / DSM 13276 / CCUG 48851 / CIP 106301 / E264)).